The chain runs to 207 residues: Large ribosomal subunit protein bL25 (207 aa).

Belongs to the bacterial ribosomal protein bL25 family. CTC subfamily. Part of the 50S ribosomal subunit; part of the 5S rRNA/L5/L18/L25 subcomplex. Contacts the 5S rRNA. Binds to the 5S rRNA independently of L5 and L18.

In terms of biological role, this is one of the proteins that binds to the 5S RNA in the ribosome where it forms part of the central protuberance. This is Large ribosomal subunit protein bL25 from Paraburkholderia xenovorans (strain LB400).